A 396-amino-acid chain; its full sequence is Potassium channel subfamily K member 9 (396 aa).

Residues 1–8 (MKRQNVRT) are Cytoplasmic-facing. Residues 9 to 29 (LSLIACTFTYLLVGAAVFDAL) form a helical membrane-spanning segment. The Extracellular segment spans residues 30-88 (ESDHEMREEEKLKAEEVRLRGKYNISSDDYQQLELVILQSEPHRAGVQWKFAGSFYFAI). Residue Asn-53 is glycosylated (N-linked (GlcNAc...) asparagine). The segment at residues 89–101 (TVITTIGYGHAAP) is an intramembrane region (pore-forming). K(+) contacts are provided by Thr-93, Ile-94, Gly-95, and Tyr-96. Residues 93-98 (TIGYGH) form a selectivity filter 1 region. Residues 102–107 (GTDAGK) are Extracellular-facing. The chain crosses the membrane as a helical span at residues 108-128 (AFCMFYAVLGIPLTLVMFQSL). At 129–158 (GERMNTFVRYLLKRIKKCCGMRNTEVSMEN) the chain is on the cytoplasmic side. The chain crosses the membrane as a helical span at residues 159-179 (MVTVGFFSCMGTLCLGAAAFS). Topologically, residues 180 to 194 (QCEDWSFFHAYYYCF) are extracellular. The pore-forming intramembrane region spans 195–207 (ITLTTIGFGDFVA). K(+) is bound by residues Thr-199, Ile-200, Gly-201, and Phe-202. Residues 199–204 (TIGFGD) are selectivity filter 2. Over 208-218 (LQSKGALQRKP) the chain is Extracellular. A helical transmembrane segment spans residues 219 to 239 (FYVAFSFMYILVGLTVIGAFL). The Cytoplasmic segment spans residues 240–396 (NLVVLRFLTM…HRLHIRRKSI (157 aa)). The tract at residues 243–248 (VLRFLT) is X-gate.

The protein belongs to the two pore domain potassium channel (TC 1.A.1.8) family. In terms of assembly, homodimer. Heterodimer with KCNK1. Heterodimer with KCNK3. As to expression, highly expressed in the CNS and at lower levels in the colon, kidney, liver, lung, spleen, stomach and skeletal muscle. The highest expression was found in the olfactory nuclei, piriform cortex, cerebellum, antedorsal thalmic nucleus, pontine nucleus, dorsal raphe and several nuclei in the medulla. Shows a non-homogeneous distribution in the hippocampus. Expressed at highest levels in the lateral posterior and inferior portions and at medium levels in neocortex. Expressed in motoneurons, including hypoglossal motoneurons (at protein level).

It localises to the cell membrane. Its subcellular location is the mitochondrion inner membrane. It is found in the cell projection. The protein localises to the dendrite. It carries out the reaction K(+)(in) = K(+)(out). It catalyses the reaction Na(+)(in) = Na(+)(out). With respect to regulation, activated by halothane and isoflurane. Inhibited by external acidification, diacylglycerol, anandamide and AGT/angiotensin II. Ruthenium red inhibits homomeric but not KCNK3:KCNK9 heteromeric channels. Its function is as follows. K(+) channel that conducts voltage-dependent outward rectifying currents upon membrane depolarization. Voltage sensing is coupled to K(+) electrochemical gradient in an 'ion flux gating' mode where outward but not inward ion flow opens the gate. Changes ion selectivity and becomes permeable to Na(+) ions in response to extracellular acidification. Protonation of the pH sensor His-98 stabilizes C-type inactivation conformation likely converting the channel from outward K(+)-conducting, to inward Na(+)-conducting to nonconductive state. Homo- and heterodimerizes to form functional channels with distinct regulatory and gating properties. Allows K(+) currents with fast-gating kinetics important for the repolarization and hyperpolarization phases of action potentials. In granule neurons, hyperpolarizes the resting membrane potential to limit intrinsic neuronal excitability, but once the action potential threshold is reached, supports high-frequency action potential firing and increased neuronal excitability. Homomeric and/or heteromeric KCNK3:KCNK9 channels operate in cerebellar granule cells, whereas heteromeric KCNK1:KCNK9 enables currents in hippocampal dentate gyrus granule neurons. Dispensable for central chemosensory respiration i.e. breathing controlled by brainstem CO2/pH, it rather conducts pH-sensitive currents and controls the firing rate of serotonergic raphe neurons involved in potentiation of the respiratory chemoreflex. In retinal ganglion cells, mediates outward rectifying currents that regulate action potentials in response to acidification of the synaptic cleft. Involved in transmission of image-forming and nonimage-forming visual information in the retina. In adrenal gland, contributes to the maintenance of a hyperpolarized resting membrane potential of aldosterone-producing cells at zona glomerulosa and limits aldosterone release as part of a regulatory mechanism that controls arterial blood pressure and electrolyte homeostasis. The sequence is that of Potassium channel subfamily K member 9 from Rattus norvegicus (Rat).